A 417-amino-acid chain; its full sequence is MDKLIIKGGKKLSGEVTVSGSKNASLPVFVSTILAPAEHEFSNVPFLRDINTTIKVMEQLGAKIEGNGNVVRIDTRGIDKHEATYDLVKTMRASVLVLGPLLSRFGIARVSLPGGCAIGARPINLHLKGLAAMGADITLSHGYVEAKAKQLKGARINFDVSTVGGTEHLMMAAATAKGETILENAAREPEIVDLANVLIKMGARIDGAGTDTIRIDGVKELGPVTHRMMPDRIEAGTFMIAAAITGGDVKIRNMQLEHLDALVFKLQDAGVEIINKDNVVRVKGPKKVRSVNIKTRPYPGFPTDMQAQFMALMCLADGASVISENIFENRFMHVSELMRFGADITTEGNAATVKGVKKLSGAPVMATDLRASASLILAGLASDNTTEISRIYHLDRGYEFIEKKLAGLGADIERVQE.

Position 22–23 (22–23 (KN)) interacts with phosphoenolpyruvate. UDP-N-acetyl-alpha-D-glucosamine is bound at residue R92. C116 (proton donor) is an active-site residue. A 2-(S-cysteinyl)pyruvic acid O-phosphothioketal modification is found at C116. Positions 304 and 326 each coordinate UDP-N-acetyl-alpha-D-glucosamine.

This sequence belongs to the EPSP synthase family. MurA subfamily.

It localises to the cytoplasm. The enzyme catalyses phosphoenolpyruvate + UDP-N-acetyl-alpha-D-glucosamine = UDP-N-acetyl-3-O-(1-carboxyvinyl)-alpha-D-glucosamine + phosphate. The protein operates within cell wall biogenesis; peptidoglycan biosynthesis. In terms of biological role, cell wall formation. Adds enolpyruvyl to UDP-N-acetylglucosamine. The sequence is that of UDP-N-acetylglucosamine 1-carboxyvinyltransferase from Geotalea daltonii (strain DSM 22248 / JCM 15807 / FRC-32) (Geobacter daltonii).